A 188-amino-acid polypeptide reads, in one-letter code: Large ribosomal subunit protein uL5 (188 aa).

It belongs to the universal ribosomal protein uL5 family. As to quaternary structure, part of the 50S ribosomal subunit; part of the 5S rRNA/L5/L18/L25 subcomplex. Contacts the 5S rRNA and the P site tRNA. Forms a bridge to the 30S subunit in the 70S ribosome.

Its function is as follows. This is one of the proteins that bind and probably mediate the attachment of the 5S RNA into the large ribosomal subunit, where it forms part of the central protuberance. In the 70S ribosome it contacts protein S13 of the 30S subunit (bridge B1b), connecting the 2 subunits; this bridge is implicated in subunit movement. Contacts the P site tRNA; the 5S rRNA and some of its associated proteins might help stabilize positioning of ribosome-bound tRNAs. This Aquifex pyrophilus protein is Large ribosomal subunit protein uL5.